The chain runs to 456 residues: Adenylosuccinate lyase (456 aa).

Residues 15 to 16 (RY), 90 to 92 (NHD), and 122 to 123 (TS) contribute to the N(6)-(1,2-dicarboxyethyl)-AMP site. The active-site Proton donor/acceptor is histidine 171. Glutamine 247 provides a ligand contact to N(6)-(1,2-dicarboxyethyl)-AMP. Serine 295 acts as the Proton donor/acceptor in catalysis. N(6)-(1,2-dicarboxyethyl)-AMP contacts are provided by residues serine 296, 301–303 (KVN), asparagine 309, arginine 335, and 340–344 (STVLR).

It belongs to the lyase 1 family. Adenylosuccinate lyase subfamily. Homotetramer. Residues from neighboring subunits contribute catalytic and substrate-binding residues to each active site.

It catalyses the reaction N(6)-(1,2-dicarboxyethyl)-AMP = fumarate + AMP. It carries out the reaction (2S)-2-[5-amino-1-(5-phospho-beta-D-ribosyl)imidazole-4-carboxamido]succinate = 5-amino-1-(5-phospho-beta-D-ribosyl)imidazole-4-carboxamide + fumarate. Its pathway is purine metabolism; AMP biosynthesis via de novo pathway; AMP from IMP: step 2/2. It participates in purine metabolism; IMP biosynthesis via de novo pathway; 5-amino-1-(5-phospho-D-ribosyl)imidazole-4-carboxamide from 5-amino-1-(5-phospho-D-ribosyl)imidazole-4-carboxylate: step 2/2. Catalyzes two reactions in de novo purine nucleotide biosynthesis. Catalyzes the breakdown of 5-aminoimidazole- (N-succinylocarboxamide) ribotide (SAICAR or 2-[5-amino-1-(5-phospho-beta-D-ribosyl)imidazole-4-carboxamido]succinate) to 5-aminoimidazole-4-carboxamide ribotide (AICAR or 5-amino-1-(5-phospho-beta-D-ribosyl)imidazole-4-carboxamide) and fumarate, and of adenylosuccinate (ADS or N(6)-(1,2-dicarboxyethyl)-AMP) to adenosine monophosphate (AMP) and fumarate. This Buchnera aphidicola subsp. Acyrthosiphon pisum (strain APS) (Acyrthosiphon pisum symbiotic bacterium) protein is Adenylosuccinate lyase (purB).